The primary structure comprises 885 residues: Chitin synthase 3 (885 aa).

The interval 1 to 59 is disordered; that stretch reads MASQYPGHQLDDIPSTNVYRPPPRHEDDEAEHALLHQNSAYQSQYDDPHSRPLTPGQES. A compositionally biased stretch (basic and acidic residues) spans 23–34; sequence PRHEDDEAEHAL. Positions 36–45 are enriched in polar residues; that stretch reads HQNSAYQSQY. The next 6 helical transmembrane spans lie at 565–585, 620–640, 650–670, 707–727, 735–755, and 837–857; these read FFLH…WFSL, IINT…FILA, VAYI…IVLS, IVII…FLYM, SFAQ…IYAF, and LVAT…SDSL.

It belongs to the chitin synthase family. Class III subfamily.

It is found in the cell membrane. The catalysed reaction is [(1-&gt;4)-N-acetyl-beta-D-glucosaminyl](n) + UDP-N-acetyl-alpha-D-glucosamine = [(1-&gt;4)-N-acetyl-beta-D-glucosaminyl](n+1) + UDP + H(+). Its function is as follows. Polymerizes chitin, a structural polymer of the cell wall and septum, by transferring the sugar moiety of UDP-GlcNAc to the non-reducing end of the growing chitin polymer. Is not only stable at different pH, but is also able to tolerate a broad temperature range. With CHS2, plays an important role in virulence. The chain is Chitin synthase 3 from Exophiala dermatitidis (Black yeast-like fungus).